The following is a 176-amino-acid chain: Adenine phosphoribosyltransferase (176 aa).

The protein belongs to the purine/pyrimidine phosphoribosyltransferase family. In terms of assembly, homodimer.

Its subcellular location is the cytoplasm. The enzyme catalyses AMP + diphosphate = 5-phospho-alpha-D-ribose 1-diphosphate + adenine. Its pathway is purine metabolism; AMP biosynthesis via salvage pathway; AMP from adenine: step 1/1. Its function is as follows. Catalyzes a salvage reaction resulting in the formation of AMP, that is energically less costly than de novo synthesis. The protein is Adenine phosphoribosyltransferase of Borreliella burgdorferi (strain ZS7) (Borrelia burgdorferi).